Consider the following 194-residue polypeptide: Small ribosomal subunit protein uS5 (194 aa).

The 64-residue stretch at 26–89 (LEEKVVEIRR…ADAKKRIIKV (64 aa)) folds into the S5 DRBM domain.

It belongs to the universal ribosomal protein uS5 family. Part of the 30S ribosomal subunit. Contacts proteins S4 and S8.

Its function is as follows. With S4 and S12 plays an important role in translational accuracy. Located at the back of the 30S subunit body where it stabilizes the conformation of the head with respect to the body. The chain is Small ribosomal subunit protein uS5 from Sulfurihydrogenibium sp. (strain YO3AOP1).